The sequence spans 386 residues: Coproporphyrinogen-III oxidase 1, chloroplastic (386 aa).

A chloroplast-targeting transit peptide spans 1-48 (MASHSSTLLSSPTFAPFSSHRLHYSPNPSTLRFSRPIRNKPNLALRCS). Residues 125–134 (VLQDGNVFEK) form an important for dimerization region. Residue serine 174 coordinates substrate. The active-site Proton donor is the histidine 188. Residues 190–192 (NYR) and 344–349 (GGRIES) contribute to the substrate site. The segment at 326–361 (YVEFNLVYDRGTTFGLKTGGRIESILVSLPLSARWE) is important for dimerization.

Belongs to the aerobic coproporphyrinogen-III oxidase family. In terms of assembly, homodimer. As to expression, expressed in cotyledons, leaves and roots.

The protein localises to the plastid. The protein resides in the chloroplast. The enzyme catalyses coproporphyrinogen III + O2 + 2 H(+) = protoporphyrinogen IX + 2 CO2 + 2 H2O. The protein operates within porphyrin-containing compound metabolism; protoporphyrin-IX biosynthesis; protoporphyrinogen-IX from coproporphyrinogen-III (O2 route): step 1/1. It participates in porphyrin-containing compound metabolism; chlorophyll biosynthesis. Its function is as follows. Key enzyme in heme biosynthesis. Catalyzes the oxidative decarboxylation of propionic acid side chains of rings A and B of coproporphyrinogen III. This is Coproporphyrinogen-III oxidase 1, chloroplastic (CPX1) from Arabidopsis thaliana (Mouse-ear cress).